Here is a 389-residue protein sequence, read N- to C-terminus: 26S proteasome non-ATPase regulatory subunit 6 (389 aa).

One can recognise a PCI domain in the interval 193–361; the sequence is DFKQAAELFL…EIVETNRPDS (169 aa).

Belongs to the proteasome subunit S10 family. Component of the 19S proteasome regulatory particle complex. The 26S proteasome consists of a 20S core particle (CP) and two 19S regulatory subunits (RP). The regulatory particle is made of a lid composed of 9 subunits including PSMD6, a base containing 6 ATPases and few additional components.

Its function is as follows. Component of the 26S proteasome, a multiprotein complex involved in the ATP-dependent degradation of ubiquitinated proteins. This complex plays a key role in the maintenance of protein homeostasis by removing misfolded or damaged proteins, which could impair cellular functions, and by removing proteins whose functions are no longer required. Therefore, the proteasome participates in numerous cellular processes, including cell cycle progression, apoptosis, or DNA damage repair. This Homo sapiens (Human) protein is 26S proteasome non-ATPase regulatory subunit 6 (PSMD6).